A 139-amino-acid chain; its full sequence is D-ribose pyranase (139 aa).

Histidine 20 (proton donor) is an active-site residue. Substrate is bound by residues aspartate 28, histidine 106, and tyrosine 128–asparagine 130.

It belongs to the RbsD / FucU family. RbsD subfamily. In terms of assembly, homodecamer.

The protein localises to the cytoplasm. It carries out the reaction beta-D-ribopyranose = beta-D-ribofuranose. The protein operates within carbohydrate metabolism; D-ribose degradation; D-ribose 5-phosphate from beta-D-ribopyranose: step 1/2. Functionally, catalyzes the interconversion of beta-pyran and beta-furan forms of D-ribose. The protein is D-ribose pyranase of Salmonella agona (strain SL483).